Consider the following 515-residue polypeptide: Anterior pharynx in excess protein 1 (515 aa).

A signal peptide spans 1-26; the sequence is MTNFSSLLTTIFLCIISSATGSGTIE. At 27-392 the chain is on the extracellular side; that stretch reads LLISSPQTVL…QASDELQLRL (366 aa). N-linked (GlcNAc...) asparagine glycosylation is present at Asn-123. The DSL domain occupies 130–172; that stretch reads NLCSSNYHGKRCNRYCIANAKLHWECSTHGVRRCSAGWSGEDC. 14 cysteine pairs are disulfide-bonded: Cys-132–Cys-141, Cys-145–Cys-155, Cys-163–Cys-172, Cys-177–Cys-187, Cys-181–Cys-193, Cys-195–Cys-204, Cys-213–Cys-218, Cys-228–Cys-237, Cys-244–Cys-256, Cys-250–Cys-268, Cys-270–Cys-279, Cys-288–Cys-300, Cys-294–Cys-310, and Cys-312–Cys-321. EGF-like domains lie at 173–205, 203–238, 240–280, and 284–322; these read SNPI…TRCE, RCEQ…DRCD, DIKI…SQCK, and SKVR…KFCE. The N-linked (GlcNAc...) asparagine glycan is linked to Asn-200. The 25-residue stretch at 325–349 folds into the EGF-like 5; incomplete domain; the sequence is NHGDCSAMRCSAGETCQISGDFAIC. A helical transmembrane segment spans residues 393–413; that stretch reads IAAICVLFSVCVIGLALVSFF. At 414–515 the chain is on the cytoplasmic side; it reads FYMHSFSKWK…AADDESSFRV (102 aa). Disordered stretches follow at residues 427-452 and 466-494; these read SQQA…SGTG and RGNA…PPAY. The span at 431-452 shows a compositional bias: low complexity; that stretch reads GGSTILPTTTSIPMSTTSSGTG.

The protein resides in the cell membrane. It is found in the nucleus. It localises to the cytoplasm. Its function is as follows. Probable ligand for lin-12/Notch and glp-1/Notch receptors and involved in the mediation of Notch signaling. Involved in the lin-12/Notch pathway signaling of cell fate in vulval precursor cells (VPCs), acting redundantly with dsl-1 and lag-2. Contributes to the establishment of the dorsal-ventral axis in early embryos. Involved in the specification of the blastomere cell ABp fate, probably acting as a signal from the P2 blastomere to the glp-1/Notch receptor on ABp and ABa. Probably acts as a signal, from the secondary vulval epithelial cells and the vulval muscle type 1 (vm1) cells, to activate the lin-12/Notch pathway in type 2 vulval muscle (vm2) cells, contributing to formation of the postsynaptic muscle plasma membrane extensions, known as muscle arms. Required for oocyte growth control, acting redundantly with lag-2, perhaps signaling via the glp-1/Notch pathway. Plays a somatic role in ovulation during adulthood, perhaps via lin-12/Notch signaling. Involved in establishing left-right asymmetry during intestinal organogenesis. This Caenorhabditis elegans protein is Anterior pharynx in excess protein 1 (apx-1).